The primary structure comprises 160 residues: MFPMVTGFMNYGQQTVRAARYIGQGFVITLSHANRLPVTIQYPYEKLIASERFRGRIHFEFDKCIACEVCVRVCPIDLPVVDWKLETDIRKKRLLNYSIDFGICIFCGNCVEYCPTNCLSMTEEYELSTYDRHELNYNQISLGRLPMSVVDDYTIRTILN.

2 consecutive 4Fe-4S ferredoxin-type domains span residues 55–84 and 95–124; these read GRIH…VDWK and LNYS…MTEE. 8 residues coordinate [4Fe-4S] cluster: Cys64, Cys67, Cys70, Cys74, Cys104, Cys107, Cys110, and Cys114.

Belongs to the complex I 23 kDa subunit family. NDH is composed of at least 16 different subunits, 5 of which are encoded in the nucleus. Requires [4Fe-4S] cluster as cofactor.

It is found in the plastid. It localises to the chloroplast thylakoid membrane. It carries out the reaction a plastoquinone + NADH + (n+1) H(+)(in) = a plastoquinol + NAD(+) + n H(+)(out). The enzyme catalyses a plastoquinone + NADPH + (n+1) H(+)(in) = a plastoquinol + NADP(+) + n H(+)(out). Its function is as follows. NDH shuttles electrons from NAD(P)H:plastoquinone, via FMN and iron-sulfur (Fe-S) centers, to quinones in the photosynthetic chain and possibly in a chloroplast respiratory chain. The immediate electron acceptor for the enzyme in this species is believed to be plastoquinone. Couples the redox reaction to proton translocation, and thus conserves the redox energy in a proton gradient. This is NAD(P)H-quinone oxidoreductase subunit I, chloroplastic from Cucumis sativus (Cucumber).